A 131-amino-acid polypeptide reads, in one-letter code: Neo-calmodulin (131 aa).

EF-hand domains are found at residues glutamate 1–asparagine 32, proline 33–aspartate 68, aspartate 70–lysine 105, and leucine 106–phenylalanine 131. Ca(2+) is bound by residues aspartate 10, aspartate 12, aspartate 14, threonine 16, glutamate 21, aspartate 46, aspartate 48, asparagine 50, threonine 52, glutamate 57, aspartate 83, aspartate 85, asparagine 87, tyrosine 89, glutamate 94, aspartate 119, aspartate 121, aspartate 123, glutamine 125, and glutamate 130.

This sequence belongs to the calmodulin family.

The protein is Neo-calmodulin of Gallus gallus (Chicken).